Here is a 38-residue protein sequence, read N- to C-terminus: Large ribosomal subunit protein bL36 (38 aa).

The protein belongs to the bacterial ribosomal protein bL36 family.

The polypeptide is Large ribosomal subunit protein bL36 (Kosmotoga olearia (strain ATCC BAA-1733 / DSM 21960 / TBF 19.5.1)).